Reading from the N-terminus, the 397-residue chain is Elongation factor Tu (397 aa).

The 198-residue stretch at 10 to 207 (LPHVNVGTIG…TLDSYIPEPV (198 aa)) folds into the tr-type G domain. Residues 19–26 (GHVDHGKT) are G1. 19-26 (GHVDHGKT) provides a ligand contact to GTP. Position 26 (Thr-26) interacts with Mg(2+). The tract at residues 60–64 (GITIN) is G2. A G3 region spans residues 81 to 84 (DCPG). Residues 81-85 (DCPGH) and 136-139 (NKAD) contribute to the GTP site. The segment at 136–139 (NKAD) is G4. Positions 174–176 (SAR) are G5.

The protein belongs to the TRAFAC class translation factor GTPase superfamily. Classic translation factor GTPase family. EF-Tu/EF-1A subfamily. In terms of assembly, monomer.

It localises to the cytoplasm. It carries out the reaction GTP + H2O = GDP + phosphate + H(+). GTP hydrolase that promotes the GTP-dependent binding of aminoacyl-tRNA to the A-site of ribosomes during protein biosynthesis. In Pseudomonas syringae pv. syringae (strain B728a), this protein is Elongation factor Tu.